We begin with the raw amino-acid sequence, 582 residues long: Aspartate--tRNA ligase (582 aa).

Glu-174 lines the L-aspartate pocket. Residues 198–201 (QITK) are aspartate. Residue Arg-220 participates in L-aspartate binding. ATP contacts are provided by residues 220 to 222 (RDE) and Gln-229. Residue His-443 participates in L-aspartate binding. Glu-477 provides a ligand contact to ATP. Arg-484 contacts L-aspartate. 529-532 (GLDR) provides a ligand contact to ATP.

This sequence belongs to the class-II aminoacyl-tRNA synthetase family. Type 1 subfamily. In terms of assembly, homodimer.

It is found in the cytoplasm. The catalysed reaction is tRNA(Asp) + L-aspartate + ATP = L-aspartyl-tRNA(Asp) + AMP + diphosphate. Functionally, catalyzes the attachment of L-aspartate to tRNA(Asp) in a two-step reaction: L-aspartate is first activated by ATP to form Asp-AMP and then transferred to the acceptor end of tRNA(Asp). In Streptococcus pyogenes serotype M1, this protein is Aspartate--tRNA ligase.